A 995-amino-acid polypeptide reads, in one-letter code: Secreted protein CSS1 (995 aa).

Positions M1 to G23 are cleaved as a signal peptide. One can recognise a Methyl-accepting transducer domain in the interval Y26–V253. 2 N-linked (GlcNAc...) asparagine glycosylation sites follow: N28 and N35. The tract at residues S98–S276 is disordered. N-linked (GlcNAc...) asparagine glycans are attached at residues N468 and N664.

Belongs to the SRP1/TIP1 family.

The protein resides in the secreted. In terms of biological role, secreted protein that may be involved in cell wall organization and biosynthesis. The sequence is that of Secreted protein CSS1 from Saccharomyces cerevisiae (strain ATCC 204508 / S288c) (Baker's yeast).